A 423-amino-acid chain; its full sequence is Type II methyltransferase M.NgoBV (423 aa).

Residues 4-423 form the SAM-dependent MTase C5-type domain; the sequence is IKFIDLFSGM…AVSERLLHTL (420 aa). Residue C80 is part of the active site.

The protein belongs to the class I-like SAM-binding methyltransferase superfamily. C5-methyltransferase family.

The catalysed reaction is a 2'-deoxycytidine in DNA + S-adenosyl-L-methionine = a 5-methyl-2'-deoxycytidine in DNA + S-adenosyl-L-homocysteine + H(+). Functionally, a methylase, recognizes the double-stranded sequence 5'-GGNNCC-3', methylates C-5 on both strands, and protects the DNA from cleavage by the NgoBV endonuclease. This is Type II methyltransferase M.NgoBV (ngoBVM) from Neisseria gonorrhoeae.